We begin with the raw amino-acid sequence, 560 residues long: MNIDVATLLSQNDILLLFVVLALGLFIAKLRIGSFQLGSSIGVLITALFMGSLGYTFTADSLNIGFMLFIFCVGIEAGPNFFGIFLRDGKHYLLLVLVVLVSAVSLSFLTGHYFGLDYGLSTGMMAGALTATPVLVGAKDALNSGLAALPEGVDFSKVIDNLSVGYAFSYLIGLTSLILLARLLPKLQKQNLQDSAMQIAQERGIGSAGQRKVYLPIIRAYRVGQELIDWTDGKNLRELGIHRQTGCHIERIRRNGILANPDGDYILQQGDEIALVGYPDSHARLDSSFRNGKEVFDRNLLDLRIAEEEIVVKSDNIAGKRLSELNLSEYGCFLNRVVRAQIEMPIEHDIVLAKGDILQVSGEKSKVHYLADKIGFISIHSQVSDLLAFCSFFILGIMFGMITMSFGQVTFGLGNAVGLLISGITLGFLRANHPTFGYVPQGALNMTKNLGLLVFMVGIGLSAGGNINEYFSEDGLKVLAAAFIVSVIPVILAYLVGAYILNMNRALLIGAIIGARTCGPAMDVVNEHARSTIPALGYAGTYAIANILMTVAGTIMILLA.

5 consecutive transmembrane segments (helical) span residues 8–28, 37–57, 66–86, 94–114, and 161–181; these read LLSQNDILLLFVVLALGLFIA, LGSSIGVLITALFMGSLGYTF, FMLFIFCVGIEAGPNFFGIFL, LLVLVVLVSAVSLSFLTGHYF, and NLSVGYAFSYLIGLTSLILLA. RCK C-terminal domains follow at residues 203 to 292 and 293 to 376; these read RGIG…FRNG and KEVF…KIGF. The next 5 helical transmembrane spans lie at 386-406, 409-429, 451-471, 478-498, and 539-559; these read LLAFCSFFILGIMFGMITMSF, VTFGLGNAVGLLISGITLGFL, GLLVFMVGIGLSAGGNINEYF, VLAAAFIVSVIPVILAYLVGA, and AGTYAIANILMTVAGTIMILL.

This sequence belongs to the AAE transporter (TC 2.A.81) family. YbjL subfamily.

It localises to the cell membrane. In Aliivibrio fischeri (strain MJ11) (Vibrio fischeri), this protein is Putative transport protein VFMJ11_0927.